A 554-amino-acid chain; its full sequence is Protein PNS1 (554 aa).

2 stretches are compositionally biased toward low complexity: residues methionine 1–asparagine 19 and serine 27–tyrosine 45. The disordered stretch occupies residues methionine 1–serine 90. The Cytoplasmic segment spans residues methionine 1–tryptophan 105. Positions proline 68–serine 90 are enriched in pro residues. The helical transmembrane segment at tryptophan 106–isoleucine 126 threads the bilayer. At histidine 127–threonine 153 the chain is on the extracellular side. 2 N-linked (GlcNAc...) asparagine glycosylation sites follow: asparagine 132 and asparagine 137. The chain crosses the membrane as a helical span at residues isoleucine 154 to methionine 174. Topologically, residues alanine 175–glutamine 181 are cytoplasmic. A helical membrane pass occupies residues phenylalanine 182 to leucine 202. The Extracellular segment spans residues serine 203–tyrosine 206. A helical transmembrane segment spans residues tryptophan 207 to cysteine 227. Residues arginine 228–serine 255 are Cytoplasmic-facing. The helical transmembrane segment at alanine 256–valine 276 threads the bilayer. Over tyrosine 277–serine 297 the chain is Extracellular. Residues glycine 298–leucine 318 form a helical membrane-spanning segment. At lysine 319–serine 352 the chain is on the cytoplasmic side. Residues leucine 353 to isoleucine 373 traverse the membrane as a helical segment. Residues arginine 374–aspartate 389 lie on the Extracellular side of the membrane. A helical membrane pass occupies residues isoleucine 390 to valine 410. Residues glutamate 411–cysteine 451 lie on the Cytoplasmic side of the membrane. The helical transmembrane segment at leucine 452 to alanine 472 threads the bilayer. The Extracellular portion of the chain corresponds to tyrosine 473–glycine 487. Residues glycine 488–phenylalanine 508 form a helical membrane-spanning segment. At threonine 509 to alanine 554 the chain is on the cytoplasmic side.

This sequence belongs to the CTL (choline transporter-like) family.

It is found in the cell membrane. Its function is as follows. Probably involved in transport through the plasma membrane. In Neurospora crassa (strain ATCC 24698 / 74-OR23-1A / CBS 708.71 / DSM 1257 / FGSC 987), this protein is Protein PNS1 (pns-1).